A 282-amino-acid chain; its full sequence is Aquaporin PIP2-7 (282 aa).

The segment at 1–21 is disordered; that stretch reads MSKEVSVEGEQPPVKDYTDPP. Residues 1-38 lie on the Cytoplasmic side of the membrane; sequence MSKEVSVEGEQPPVKDYTDPPPEPLLNFGELRLWSFYR. The chain crosses the membrane as a helical span at residues 39–59; it reads ALIAEFVATLLFLYVTIATVI. The Extracellular segment spans residues 60–71; it reads GHKEQNAADQCS. A helical transmembrane segment spans residues 72–92; it reads GVGLLGIAWAFGGMIFILVYC. The Cytoplasmic portion of the chain corresponds to 93–120; that stretch reads TAGISGGHINPAVTLGLFLARKVSLIRA. The NPA 1 motif lies at 102–104; the sequence is NPA. Residues 121-141 form a helical membrane-spanning segment; the sequence is LLYMVAQCLGAIVGVGIVKGI. At 142 to 162 the chain is on the extracellular side; sequence MKHQYNSLGGGANVVAAGYSK. A helical transmembrane segment spans residues 163–183; it reads GTALGAEIIGTFVLVYTVFSA. The Cytoplasmic portion of the chain corresponds to 184–196; the sequence is TDPKRSARDSHVP. The chain crosses the membrane as a helical span at residues 197–217; it reads VLAPLPIGFAVFMVHLATIPI. Topologically, residues 218 to 244 are extracellular; the sequence is TGTGINPARSLGAAVIYNQDKPWDDHW. The NPA 2 motif lies at 223–225; it reads NPA. Residues 245–265 traverse the membrane as a helical segment; that stretch reads ILWVGPFVGALAAAAYHQYIL. Residues 266-282 are Cytoplasmic-facing; sequence RAAAIKALGSFRSNPSN.

This sequence belongs to the MIP/aquaporin (TC 1.A.8) family. PIP (TC 1.A.8.11) subfamily. As to expression, expressed in roots, leaves and fruits.

Its subcellular location is the cell membrane. Its function is as follows. Water channel required to facilitate the transport of water across cell membrane; mercury-insensitive. Contributes to the tolerance to multiple abiotic stresses including salt (NaCl), cold and water deprivation, by modulating cytosolic K(+)/Na(+) ratio, maintaining osmotic balance, and reducing membrane injury (e.g. oxidative injury). Also regulates the expression of abscisic acid (ABA)- biosynthetic and -responsive genes during dehydration and salt stresses. In Musa acuminata (Banana), this protein is Aquaporin PIP2-7.